Consider the following 301-residue polypeptide: Putative S-adenosyl-L-methionine-dependent methyltransferase Mflv_5024 (301 aa).

Residues Asp-129 and 158 to 159 (DL) each bind S-adenosyl-L-methionine.

The protein belongs to the UPF0677 family.

Its function is as follows. Exhibits S-adenosyl-L-methionine-dependent methyltransferase activity. The polypeptide is Putative S-adenosyl-L-methionine-dependent methyltransferase Mflv_5024 (Mycolicibacterium gilvum (strain PYR-GCK) (Mycobacterium gilvum (strain PYR-GCK))).